Consider the following 88-residue polypeptide: Small ribosomal subunit protein bS20 (88 aa).

Belongs to the bacterial ribosomal protein bS20 family.

Functionally, binds directly to 16S ribosomal RNA. The polypeptide is Small ribosomal subunit protein bS20 (Natranaerobius thermophilus (strain ATCC BAA-1301 / DSM 18059 / JW/NM-WN-LF)).